The sequence spans 563 residues: Coiled-coil domain-containing protein 38 (563 aa).

A coiled-coil region spans residues threonine 128–glutamate 211. The tract at residues aspartate 265 to serine 310 is disordered. Residues aspartate 269–serine 281 are compositionally biased toward basic and acidic residues. 2 coiled-coil regions span residues glutamine 361–leucine 415 and asparagine 454–glutamine 522. The interval glutamine 543–serine 563 is disordered.

As to quaternary structure, interacts with CCDC42, CFAP53, IFT88 and ODF2. Interacts with CCDC146. Interacts with TEKT3. Interacts with ubiquitinated histone H2A. Expressed exclusively in testis where it is detected mainly in spermatogonia and spermatocytes (at protein level).

The protein localises to the cytoplasm. The protein resides in the cytoskeleton. It localises to the microtubule organizing center. Its subcellular location is the centrosome. It is found in the perinuclear region. The protein localises to the cell projection. The protein resides in the cilium. It localises to the flagellum. Functionally, essential for male fertility. Required for sperm flagellum biogenesis. Also required for acrosome biogenesis. Required for the attachment of developing acrosomes to the nucleus during spermiogenesis and may be involved in the transport of fibrous sheath components. In Mus musculus (Mouse), this protein is Coiled-coil domain-containing protein 38 (Ccdc38).